We begin with the raw amino-acid sequence, 236 residues long: 7-cyano-7-deazaguanine synthase 2 (236 aa).

An ATP-binding site is contributed by 11-21; that stretch reads FSGGQDSATCL. The Zn(2+) site is built by Cys199, Cys214, Cys217, and Cys220.

Belongs to the QueC family. The cofactor is Zn(2+).

The enzyme catalyses 7-carboxy-7-deazaguanine + NH4(+) + ATP = 7-cyano-7-deazaguanine + ADP + phosphate + H2O + H(+). Its pathway is purine metabolism; 7-cyano-7-deazaguanine biosynthesis. In terms of biological role, catalyzes the ATP-dependent conversion of 7-carboxy-7-deazaguanine (CDG) to 7-cyano-7-deazaguanine (preQ(0)). The protein is 7-cyano-7-deazaguanine synthase 2 of Sphingopyxis alaskensis (strain DSM 13593 / LMG 18877 / RB2256) (Sphingomonas alaskensis).